Here is a 1690-residue protein sequence, read N- to C-terminus: Restin homolog (1690 aa).

2 stretches are compositionally biased toward polar residues: residues 1–11 (MSDDTSASGGT) and 39–51 (NIPT…TGIP). The disordered stretch occupies residues 1-105 (MSDDTSASGG…ESDDNLSSIN (105 aa)). Ser64 and Ser67 each carry phosphoserine. The CAP-Gly 1 domain occupies 143-185 (GDTHFAAGEWAGVVLDEPNGKNDGCVSGKRYFQCEPKRGIFSR). The disordered stretch occupies residues 195 to 227 (AGAQTPTSPLAKSSPDRSRTVSPTASIRSSMLR). Residues 214–226 (TVSPTASIRSSML) show a composition bias toward polar residues. Ser216 bears the Phosphoserine mark. The CAP-Gly 2 domain maps to 260–302 (GETQFAPGNWCGVELDEPSGKNDGTVDDIRYFECKPKYGVFVP). Phosphoserine is present on residues Ser309, Ser322, and Ser325. Thr327 is modified (phosphothreonine). Residue Ser328 is modified to Phosphoserine. Thr362 carries the phosphothreonine modification. 7 coiled-coil regions span residues 378 to 468 (QHVE…VSAT), 484 to 660 (GALQ…DMLR), 667 to 916 (EEKS…TKLK), 926 to 981 (LSSC…ELQA), 1001 to 1121 (ATGH…EAIQ), 1158 to 1549 (EADM…AQMN), and 1565 to 1600 (DIET…LETL). The segment at 843–905 (QQAAASGEEG…GSLEEEAKKS (63 aa)) is disordered. Polar residues predominate over residues 865–885 (QLKSQAEETQSELKSTQSNLE). Disordered regions lie at residues 1031 to 1052 (QLQD…KEKS) and 1400 to 1419 (KLDE…NEIQ). 2 stretches are compositionally biased toward basic and acidic residues: residues 1040-1052 (TKLK…KEKS) and 1410-1419 (SQKKSHNEIQ). The disordered stretch occupies residues 1635–1665 (TEDCPIQGSEDQDYSTPSSESNNNEKERKLP). Phosphothreonine is present on Thr1681. A Phosphoserine modification is found at Ser1682.

As to quaternary structure, interacts with Lva. In terms of tissue distribution, specifically expressed at the tip of the furrow in cellularizing blastoderms. CLIP-190 and jar are coexpressed at several times in development and in a number of tissues, including embryonic axonal neuron processes and posterior pole.

Its subcellular location is the cytoplasm. It is found in the cytoskeleton. The protein localises to the golgi apparatus. The protein resides in the microtubule organizing center. It localises to the perinuclear region. Functionally, together CLIP-190 and jar may coordinate the interaction between the actin and microtubule cytoskeleton. May link endocytic vesicles to microtubules. May play a role in formation of furrows during cellularization. In Drosophila melanogaster (Fruit fly), this protein is Restin homolog (CLIP-190).